The chain runs to 257 residues: NAD kinase (257 aa).

D46 functions as the Proton acceptor in the catalytic mechanism. NAD(+)-binding positions include 46-47, H51, 116-117, D146, A154, 157-162, and Q218; these read DG, NE, and TAYNLS.

The protein belongs to the NAD kinase family. The cofactor is a divalent metal cation.

Its subcellular location is the cytoplasm. The catalysed reaction is NAD(+) + ATP = ADP + NADP(+) + H(+). Its function is as follows. Involved in the regulation of the intracellular balance of NAD and NADP, and is a key enzyme in the biosynthesis of NADP. Catalyzes specifically the phosphorylation on 2'-hydroxyl of the adenosine moiety of NAD to yield NADP. The polypeptide is NAD kinase (Rhizobium meliloti (strain 1021) (Ensifer meliloti)).